Reading from the N-terminus, the 508-residue chain is MGLPWFRVHTVVLNDPGRLISVHLMHTALVSGWAGSMAFYELAVFDPSDPVLNPMWRQGMFVLPFMTRLGITKSWGGWNISGESISDPGLWSYEGVAATHIVLSGLLFLASIWHWVYWDLELFRDPRTGKPALDLPKIFGIHLFLSGLLCFGFGAFHVTGLFGPGIWVSDPYGITGRVQPVAPAWGAEGFDPFNPGGIASHHIAAGILGILAGLFHLTVRPPFRLYKALRMGNIETVLSSSIAAVFWAAFVVAGTMWYGSAATPIELFGPTRYQWDLGFFQQEIEKRVQASLAGGASLSEAWSSIPEKLAFYDYIGNNPAKGGLFRAGPMNNGDGIAAGWLGHAVFKDKEGRELFVRRMPTFFETFPVLLLDKDGVVKADVPFRRAESKYSVEQVGVTVTFYGGELDGVTFKDPATVKKYARRAQLGEVFEFDRARLKSDGVFRSSPRGWFTFGHLCFALLFFFGHIWHGARTIFRDVFAGIDPDLDEQVEFGAYQKLGDPSTRKQAV.

6 helical membrane-spanning segments follow: residues 21–36 (SVHLMHTALVSGWAGS), 101–115 (IVLSGLLFLASIWHW), 140–156 (GIHLFLSGLLCFGFGAF), 203–218 (IAAGILGILAGLFHLT), 237–252 (VLSSSIAAVFWAAFVV), and 457–472 (CFALLFFFGHIWHGAR).

It belongs to the PsbB/PsbC family. PsbB subfamily. As to quaternary structure, PSII is composed of 1 copy each of membrane proteins PsbA, PsbB, PsbC, PsbD, PsbE, PsbF, PsbH, PsbI, PsbJ, PsbK, PsbL, PsbM, PsbT, PsbX, PsbY, PsbZ, Psb30/Ycf12, at least 3 peripheral proteins of the oxygen-evolving complex and a large number of cofactors. It forms dimeric complexes. It depends on Binds multiple chlorophylls. PSII binds additional chlorophylls, carotenoids and specific lipids. as a cofactor.

It localises to the plastid. Its subcellular location is the chloroplast thylakoid membrane. Functionally, one of the components of the core complex of photosystem II (PSII). It binds chlorophyll and helps catalyze the primary light-induced photochemical processes of PSII. PSII is a light-driven water:plastoquinone oxidoreductase, using light energy to abstract electrons from H(2)O, generating O(2) and a proton gradient subsequently used for ATP formation. In Chlorokybus atmophyticus (Soil alga), this protein is Photosystem II CP47 reaction center protein.